The chain runs to 34 residues: Photosystem II reaction center protein M (34 aa).

Residues 5 to 25 (ILAFIATALFILVPTAFLLII) traverse the membrane as a helical segment.

It belongs to the PsbM family. As to quaternary structure, PSII is composed of 1 copy each of membrane proteins PsbA, PsbB, PsbC, PsbD, PsbE, PsbF, PsbH, PsbI, PsbJ, PsbK, PsbL, PsbM, PsbT, PsbX, PsbY, PsbZ, Psb30/Ycf12, at least 3 peripheral proteins of the oxygen-evolving complex and a large number of cofactors. It forms dimeric complexes.

The protein resides in the plastid. It localises to the chloroplast thylakoid membrane. Its function is as follows. One of the components of the core complex of photosystem II (PSII). PSII is a light-driven water:plastoquinone oxidoreductase that uses light energy to abstract electrons from H(2)O, generating O(2) and a proton gradient subsequently used for ATP formation. It consists of a core antenna complex that captures photons, and an electron transfer chain that converts photonic excitation into a charge separation. This subunit is found at the monomer-monomer interface. The protein is Photosystem II reaction center protein M of Cenchrus americanus (Pearl millet).